The primary structure comprises 92 residues: Phospholemman (92 aa).

A signal peptide spans 1 to 20 (MASLGHILVFCVGLLTMAKA). Residues 21–35 (ESPKEHDPFTYDYQS) lie on the Extracellular side of the membrane. The helical transmembrane segment at 36–56 (LQIGGLVIAGILFILGILIVL) threads the bilayer. Over 57–92 (SRRCRCKFNQQQRTGEPDEEEGTFRSSIRRLSTRRR) the chain is Cytoplasmic. Cys-60 is lipidated: S-palmitoyl cysteine. Cys-62 is modified (S-glutathionyl cysteine; alternate). Residue Cys-62 is the site of S-palmitoyl cysteine; alternate attachment. Positions 65-92 (NQQQRTGEPDEEEGTFRSSIRRLSTRRR) are disordered. Position 79 is a phosphothreonine (Thr-79). Ser-82 is modified (phosphoserine). Ser-83 carries the post-translational modification Phosphoserine; by PKA and PKC. The span at 83-92 (SIRRLSTRRR) shows a compositional bias: basic residues. The residue at position 88 (Ser-88) is a Phosphoserine; by PKA. Thr-89 bears the Phosphothreonine; by PKC mark.

The protein belongs to the FXYD family. As to quaternary structure, homotetramer. Monomer. Regulatory subunit of the sodium/potassium-transporting ATPase (NKA) which is composed of a catalytic alpha subunit, an auxiliary non-catalytic beta subunit and an additional regulatory subunit. The monomeric form associates with NKA while the oligomeric form does not. Interacts with the catalytic alpha-1 subunit ATP1A1. Also interacts with the catalytic alpha-2 and alpha-3 subunits ATP1A2 and ATP1A3. Very little interaction with ATP1A1, ATP1A2 or ATP1A3 when phosphorylated at Ser-83. Interacts with the non-catalytic beta-1 subunit ATP1B1. Oxidative stress decreases interaction with ATP1A1 but increases interaction with ATP1B1. Post-translationally, major plasma membrane substrate for cAMP-dependent protein kinase (PKA) and protein kinase C (PKC) in several different tissues. Phosphorylated in response to insulin and adrenergic stimulation. Phosphorylation at Ser-88 stimulates sodium/potassium-transporting ATPase activity while the unphosphorylated form inhibits sodium/potassium-transporting ATPase activity. Phosphorylation increases tetramerization, decreases binding to ATP1A1 and reduces inhibition of ATP1A1 activity. Phosphorylation at Ser-83 leads to greatly reduced interaction with ATP1A1, ATP1A2 and ATP1A3. May be phosphorylated by DMPK. In terms of processing, palmitoylation increases half-life and stability and is enhanced upon phosphorylation at Ser-88 by PKA. In terms of tissue distribution, highest expression in skeletal muscle and heart. Moderate levels in brain, placenta, lung, liver, pancreas, uterus, bladder, prostate, small intestine and colon with mucosal lining. Very low levels in kidney, colon and small intestine without mucosa, prostate without endothelial lining, spleen, and testis.

The protein resides in the cell membrane. Its subcellular location is the sarcolemma. It localises to the apical cell membrane. It is found in the membrane. The protein localises to the caveola. The protein resides in the T-tubule. In terms of biological role, associates with and regulates the activity of the sodium/potassium-transporting ATPase (NKA) which transports Na(+) out of the cell and K(+) into the cell. Inhibits NKA activity in its unphosphorylated state and stimulates activity when phosphorylated. Reduces glutathionylation of the NKA beta-1 subunit ATP1B1, thus reversing glutathionylation-mediated inhibition of ATP1B1. Contributes to female sexual development by maintaining the excitability of neurons which secrete gonadotropin-releasing hormone. This chain is Phospholemman, found in Homo sapiens (Human).